Reading from the N-terminus, the 451-residue chain is Phosphoglucosamine mutase (451 aa).

Serine 103 serves as the catalytic Phosphoserine intermediate. Mg(2+) contacts are provided by serine 103, aspartate 243, aspartate 245, and aspartate 247. Phosphoserine is present on serine 103.

The protein belongs to the phosphohexose mutase family. Mg(2+) serves as cofactor. Post-translationally, activated by phosphorylation.

The enzyme catalyses alpha-D-glucosamine 1-phosphate = D-glucosamine 6-phosphate. In terms of biological role, catalyzes the conversion of glucosamine-6-phosphate to glucosamine-1-phosphate. The protein is Phosphoglucosamine mutase of Lactobacillus johnsonii (strain CNCM I-12250 / La1 / NCC 533).